Reading from the N-terminus, the 299-residue chain is Heterodisulfide reductase subunit B-like protein (299 aa).

Belongs to the HdrB family. As to quaternary structure, the heterodisulfide reductase is composed of three subunits; HdlA, HdlB and HdlC. It forms a complex with the F420-non-reducing hydrogenase (Mvh), which provides the reducing equivalents to the heterodisulfide reductase.

The protein resides in the cytoplasm. In terms of biological role, has oxidoreductase activity. The Hdl and Mvh subunits may together mediate electron transfer from hydrogen to an unidentified electron acceptor on the cytoplasmic side of the membrane. This Archaeoglobus profundus (strain DSM 5631 / JCM 9629 / NBRC 100127 / Av18) protein is Heterodisulfide reductase subunit B-like protein (hdlB).